We begin with the raw amino-acid sequence, 408 residues long: Homogentisate geranylgeranyltransferase (408 aa).

A chloroplast-targeting transit peptide spans 1 to 62 (MQAVTAAAAA…TVMHKFSAIS (62 aa)). 9 helical membrane-spanning segments follow: residues 122 to 142 (HTIF…MKSI), 156 to 176 (ALTA…LYDI), 194 to 214 (SVAT…SIGI), 221 to 241 (LMCA…EAPF), 248 to 268 (ALLA…LAFF), 286 to 306 (LVFA…FKDI), 329 to 349 (VYQL…LVGA), 352 to 372 (TNLF…LTLW), and 386 to 406 (VTSF…LIPF).

This sequence belongs to the UbiA prenyltransferase family. Expressed in seeds.

It localises to the plastid. The protein localises to the chloroplast membrane. It catalyses the reaction homogentisate + (2E,6E,10E)-geranylgeranyl diphosphate + H(+) = 6-geranylgeranyl-2-methylbenzene-1,4-diol + CO2 + diphosphate. It participates in cofactor biosynthesis; tocopherol biosynthesis. Involved in the synthesis of tocotrienol (vitamin E). Catalyzes the condensation of homogentisate and geranylgeranyl diphosphate to form 2-methyl-6-geranylgeranylbenzoquinol. Possesses low activity with phytyl diphosphate as substrate. The chain is Homogentisate geranylgeranyltransferase from Hordeum vulgare (Barley).